A 251-amino-acid polypeptide reads, in one-letter code: Ubiquinone/menaquinone biosynthesis C-methyltransferase UbiE (251 aa).

Residues Thr-74, Asp-95, 123-124, and Ser-140 contribute to the S-adenosyl-L-methionine site; that span reads NA.

The protein belongs to the class I-like SAM-binding methyltransferase superfamily. MenG/UbiE family.

The catalysed reaction is a 2-demethylmenaquinol + S-adenosyl-L-methionine = a menaquinol + S-adenosyl-L-homocysteine + H(+). The enzyme catalyses a 2-methoxy-6-(all-trans-polyprenyl)benzene-1,4-diol + S-adenosyl-L-methionine = a 5-methoxy-2-methyl-3-(all-trans-polyprenyl)benzene-1,4-diol + S-adenosyl-L-homocysteine + H(+). Its pathway is quinol/quinone metabolism; menaquinone biosynthesis; menaquinol from 1,4-dihydroxy-2-naphthoate: step 2/2. It participates in cofactor biosynthesis; ubiquinone biosynthesis. Methyltransferase required for the conversion of demethylmenaquinol (DMKH2) to menaquinol (MKH2) and the conversion of 2-polyprenyl-6-methoxy-1,4-benzoquinol (DDMQH2) to 2-polyprenyl-3-methyl-6-methoxy-1,4-benzoquinol (DMQH2). This chain is Ubiquinone/menaquinone biosynthesis C-methyltransferase UbiE, found in Salmonella paratyphi A (strain AKU_12601).